A 119-amino-acid polypeptide reads, in one-letter code: Protein FATTY ACID EXPORT 5 (119 aa).

3 consecutive transmembrane segments (helical) span residues 27-47 (SIAS…AGFI), 57-77 (TSLL…FVMG), and 85-105 (KIMP…FYVY).

The protein belongs to the TMEM14 family.

Its subcellular location is the membrane. Its function is as follows. May be involved in free fatty acids export. The protein is Protein FATTY ACID EXPORT 5 of Arabidopsis thaliana (Mouse-ear cress).